The chain runs to 242 residues: uncharacterized protein (242 aa).

Helical transmembrane passes span 75–95, 116–136, and 176–196; these read YAIFHIFLPFILTLLLYHNFY, IVLIFTYVMTVIIVYFSFSLI, and IQGLAHIILSLLLFILGLEVI. A disordered region spans residues 204 to 242; the sequence is DVEMSSMRGQAITTEPASDNTMAEGTDCNTSKDVESGSS. Residues 210–232 are compositionally biased toward polar residues; sequence MRGQAITTEPASDNTMAEGTDCN. Over residues 233–242 the composition is skewed to basic and acidic residues; sequence TSKDVESGSS.

Its subcellular location is the cytoplasm. It localises to the membrane. This is an uncharacterized protein from Schizosaccharomyces pombe (strain 972 / ATCC 24843) (Fission yeast).